Here is a 1172-residue protein sequence, read N- to C-terminus: Phytochrome B (1172 aa).

Over residues 1–16 the composition is skewed to gly residues; that stretch reads MVSGVGGSGGGRGGGR. A disordered region spans residues 1–54; the sequence is MVSGVGGSGGGRGGGRGGEEEPSSSHTPNNRRGGEQAQSSGTKSLRPRSNTESM. Positions 24 to 54 are enriched in polar residues; it reads SSHTPNNRRGGEQAQSSGTKSLRPRSNTESM. Residues 252 to 433 enclose the GAF domain; that stretch reads DIKLLCDTVV…AFGLQLNMEL (182 aa). Cys357 contributes to the phytochromobilin binding site. 2 PAS domains span residues 652–723 and 786–857; these read VARE…LRGD and DYKA…MIVL. The Histidine kinase domain occupies 934–1153; it reads YICQVIKNPL…LIILELPVPR (220 aa).

This sequence belongs to the phytochrome family. In terms of assembly, homodimer. Interacts with ADO1 and PKS4. Stabilized by interactions with PAPP5 and FYPP3 which are enhanced in the phosphorylated Pfr form. Interacts with VOZ1 and VOZ2. Binds, via its photosensory domain, to PTAC12/HMR/PAP5 when photoactivated; this interaction stimulates its localization to photobodies. Interacts with CRY1 specifically when in the dark/far-red (Pr) state, but not when red light-activated (Pfr). Interacts with PIF4 and PIF5 in response to low blue light (LBL). Component of a red light-dependent nuclear complex made of PHL, PHYB and CO. Interacts directly with PHL. Binds to UNE10/PIF8 when red light-activated (Pfr). When light-activated, interacts with PCH1 and PCHL. Associated with DRT111/RSN2/SFPS, SMP2 and SWAP1 in nuclear photobodies upon response to red light (Pfr form). Post-translationally, contains one covalently linked phytochromobilin chromophore. In terms of tissue distribution, expressed in fruits, flowers, leaves, stems, seedlings and roots.

The protein localises to the cytoplasm. Its subcellular location is the nucleus. The protein resides in the nucleoplasm. It localises to the nucleus speckle. In terms of biological role, regulatory photoreceptor which exists in two forms that are reversibly interconvertible by light: the Pr form that absorbs maximally in the red region of the spectrum and the Pfr form that absorbs maximally in the far-red region. Photoconversion of Pr to Pfr induces an array of morphogenetic responses, whereas reconversion of Pfr to Pr cancels the induction of those responses. Pfr controls the expression of a number of nuclear genes including those encoding the small subunit of ribulose-bisphosphate carboxylase, chlorophyll A/B binding protein, protochlorophyllide reductase, rRNA, etc. It also controls the expression of its own gene(s) in a negative feedback fashion. Involved in the flowering time regulation. Involved in light-regulated circadian phase control that triggers stomatal aperture, stomatal conductance, and CO(2) assimilation. Implicated in red light perception, and, to a lower extent, in blue light signaling. Controls thermomorphogenesis in the daytime and regulates temperature responses by associating with the promoters of key target genes in a temperature-dependent manner and subsequently repressing their expression in a PIF4-dependent manner (temperature-responsive transcriptional regulator); this process requires PTAC12/HMR/PAP5 (transcriptional activator). Thermal timer that integrates temperature information over the course of the night. Detabilizes UNE10/PIF8 in red light. This is Phytochrome B from Arabidopsis thaliana (Mouse-ear cress).